We begin with the raw amino-acid sequence, 218 residues long: ATP-dependent dethiobiotin synthetase BioD (218 aa).

Asparagine 10–threonine 15 contributes to the ATP binding site. Threonine 14 serves as a coordination point for Mg(2+). The active site involves lysine 35. Threonine 39 serves as a coordination point for substrate. Residues histidine 52 and glutamate 116 each coordinate Mg(2+). ATP-binding positions include glutamate 116–glycine 119 and leucine 176–arginine 177.

Belongs to the dethiobiotin synthetase family. Homodimer. It depends on Mg(2+) as a cofactor.

Its subcellular location is the cytoplasm. It catalyses the reaction (7R,8S)-7,8-diammoniononanoate + CO2 + ATP = (4R,5S)-dethiobiotin + ADP + phosphate + 3 H(+). It functions in the pathway cofactor biosynthesis; biotin biosynthesis; biotin from 7,8-diaminononanoate: step 1/2. Functionally, catalyzes a mechanistically unusual reaction, the ATP-dependent insertion of CO2 between the N7 and N8 nitrogen atoms of 7,8-diaminopelargonic acid (DAPA, also called 7,8-diammoniononanoate) to form a ureido ring. The protein is ATP-dependent dethiobiotin synthetase BioD of Helicobacter pylori (strain Shi470).